The sequence spans 345 residues: Phosphoribosylformylglycinamidine cyclo-ligase (345 aa).

It belongs to the AIR synthase family.

Its subcellular location is the cytoplasm. The catalysed reaction is 2-formamido-N(1)-(5-O-phospho-beta-D-ribosyl)acetamidine + ATP = 5-amino-1-(5-phospho-beta-D-ribosyl)imidazole + ADP + phosphate + H(+). It functions in the pathway purine metabolism; IMP biosynthesis via de novo pathway; 5-amino-1-(5-phospho-D-ribosyl)imidazole from N(2)-formyl-N(1)-(5-phospho-D-ribosyl)glycinamide: step 2/2. The polypeptide is Phosphoribosylformylglycinamidine cyclo-ligase (Escherichia coli (strain K12 / MC4100 / BW2952)).